A 373-amino-acid polypeptide reads, in one-letter code: Dual-specificity RNA methyltransferase RlmN (373 aa).

The active-site Proton acceptor is the E94. The region spanning 100 to 339 (EDDRATLCVS…VIVRKTRGDD (240 aa)) is the Radical SAM core domain. C107 and C344 are disulfide-bonded. 3 residues coordinate [4Fe-4S] cluster: C114, C118, and C121. S-adenosyl-L-methionine-binding positions include 168-169 (GE), S200, 222-224 (SIH), and N301. C344 functions as the S-methylcysteine intermediate in the catalytic mechanism.

This sequence belongs to the radical SAM superfamily. RlmN family. [4Fe-4S] cluster serves as cofactor.

It localises to the cytoplasm. It catalyses the reaction adenosine(2503) in 23S rRNA + 2 reduced [2Fe-2S]-[ferredoxin] + 2 S-adenosyl-L-methionine = 2-methyladenosine(2503) in 23S rRNA + 5'-deoxyadenosine + L-methionine + 2 oxidized [2Fe-2S]-[ferredoxin] + S-adenosyl-L-homocysteine. The catalysed reaction is adenosine(37) in tRNA + 2 reduced [2Fe-2S]-[ferredoxin] + 2 S-adenosyl-L-methionine = 2-methyladenosine(37) in tRNA + 5'-deoxyadenosine + L-methionine + 2 oxidized [2Fe-2S]-[ferredoxin] + S-adenosyl-L-homocysteine. Specifically methylates position 2 of adenine 2503 in 23S rRNA and position 2 of adenine 37 in tRNAs. m2A2503 modification seems to play a crucial role in the proofreading step occurring at the peptidyl transferase center and thus would serve to optimize ribosomal fidelity. This Shewanella putrefaciens (strain CN-32 / ATCC BAA-453) protein is Dual-specificity RNA methyltransferase RlmN.